The following is a 156-amino-acid chain: Endogenous retrovirus group K member 21 Pro protein (156 aa).

Positions 21–96 constitute a Peptidase A2 domain; that stretch reads FEGLVDTGAD…IPLNLWGRDL (76 aa). Residue D26 is part of the active site. The 46-residue stretch at 111-156 folds into the G-patch domain; sequence YSPTSQKIMTKMGYIPGKGLGKNEDGIKVPVEAKINQKREGIGYPF.

This sequence belongs to the peptidase A2 family. HERV class-II K(HML-2) subfamily. Active as a homodimer. In terms of processing, autoproteolytically processed at the N-terminus. Expected C-terminal autoprocessing not detected. The sequence shown is that of the processed Pro protein.

It catalyses the reaction Processing at the authentic HIV-1 PR recognition site and release of the mature p17 matrix and the p24 capsid protein, as a result of the cleavage of the -SQNY-|-PIVQ- cleavage site.. Functionally, retroviral proteases have roles in the processing of the primary translation products and the maturation of the viral particle. Endogenous Pro proteins may have kept, lost or modified their original function during evolution. The protein is Endogenous retrovirus group K member 21 Pro protein (ERVK-21) of Homo sapiens (Human).